Consider the following 700-residue polypeptide: Hedgehog-interacting protein (700 aa).

An N-terminal signal peptide occupies residues 1–17 (MLKMLSFKLLLLAVALG). N99 carries N-linked (GlcNAc...) asparagine glycosylation. Cystine bridges form between C216/C536, C218/C543, C402/C624, C435/C452, C500/C594, C608/C617, C612/C623, C625/C634, C639/C649, C643/C655, and C657/C666. The tract at residues 376–388 (LDDMEEMDGLSDF) is interaction with SHH zinc binding site. D383 contributes to the Zn(2+) binding site. N416, N447, and N459 each carry an N-linked (GlcNAc...) asparagine glycan. EGF-like domains follow at residues 607 to 634 (ECSR…GDFC) and 635 to 667 (RTAK…PQCE).

This sequence belongs to the HHIP family. In terms of assembly, interacts with all three hedgehog family members, SHH, IHH and DHH. Widely expressed in fetal and adult tissues. Highest expression in adult heart, liver and pancreas, and in fetal kidney.

It is found in the cell membrane. The protein localises to the secreted. It localises to the cytoplasm. Functionally, modulates hedgehog signaling in several cell types including brain and lung through direct interaction with members of the hedgehog family. The protein is Hedgehog-interacting protein (HHIP) of Homo sapiens (Human).